A 99-amino-acid chain; its full sequence is Nucleoid-associated protein EbfC (99 aa).

The protein belongs to the YbaB/EbfC family. Homodimer.

It is found in the cytoplasm. The protein resides in the nucleoid. Functionally, binds to DNA and alters its conformation. May be involved in regulation of gene expression, nucleoid organization and DNA protection. This is Nucleoid-associated protein EbfC from Borreliella burgdorferi (strain ZS7) (Borrelia burgdorferi).